Consider the following 415-residue polypeptide: Probable disease resistance protein At5g66890 (415 aa).

The NB-ARC domain maps to 8-43 (SFDALPHNLRECFLDMASFLEDQRIIASTIIDLWSA). LRR repeat units follow at residues 229–251 (SLEKLSLWFCHVVDALNELEDVS), 256–278 (SLQEIEIDYCYNLDELPYWISQV), 280–303 (SLKKLSVTNCNKLCRVIEAIGDLR), 304–326 (DLETLRLSSCASLLELPETIDRL), 328–351 (NLRFLDVSGGFQLKNLPLEIGKLK), and 352–373 (KLEKISMKDCYRCELPDSVKNL). A coiled-coil region spans residues 239-260 (HVVDALNELEDVSETLQSLQEI).

Belongs to the disease resistance NB-LRR family.

Functionally, possible disease resistance protein. This Arabidopsis thaliana (Mouse-ear cress) protein is Probable disease resistance protein At5g66890.